The following is a 78-amino-acid chain: Beta-defensin 105A (78 aa).

The N-terminal stretch at 1 to 27 is a signal peptide; it reads MALIRKTFYFLFAVFFILVQLPSGCQA. Cystine bridges form between Cys-46/Cys-74, Cys-53/Cys-67, and Cys-57/Cys-73.

It belongs to the beta-defensin family.

The protein localises to the secreted. Functionally, has antimicrobial activity. The sequence is that of Beta-defensin 105A (DEFB105A) from Hylobates lar (Lar gibbon).